Here is a 152-residue protein sequence, read N- to C-terminus: Small ribosomal subunit protein uS11B (152 aa).

Positions 131-152 (EDVTPIPSDSTRRKGGRRGRRL) are disordered. Basic residues predominate over residues 143–152 (RKGGRRGRRL).

Belongs to the universal ribosomal protein uS11 family.

This chain is Small ribosomal subunit protein uS11B, found in Anopheles gambiae (African malaria mosquito).